Reading from the N-terminus, the 167-residue chain is Antibacterial peptide PMAP-37 (167 aa).

The signal sequence occupies residues 1-29 (METQRASLCLGRWSLWLLLLALVVPSASA). A propeptide spanning residues 30 to 130 (QALSYREAVL…DITCNEIQSV (101 aa)) is cleaved from the precursor. 2 disulfides stabilise this stretch: cysteine 85/cysteine 96 and cysteine 107/cysteine 124.

Belongs to the cathelicidin family.

It is found in the secreted. Exerts antimicrobial activity against both Gram-positive and negative bacteria with minimal inhibitory concentrations ranging over 1-4 micro molar. Its activity appears to be mediated by its ability to damage bacterial membranes. This chain is Antibacterial peptide PMAP-37 (PMAP37), found in Sus scrofa (Pig).